A 261-amino-acid polypeptide reads, in one-letter code: 3-deoxy-manno-octulosonate cytidylyltransferase (261 aa).

This sequence belongs to the KdsB family.

The protein localises to the cytoplasm. The catalysed reaction is 3-deoxy-alpha-D-manno-oct-2-ulosonate + CTP = CMP-3-deoxy-beta-D-manno-octulosonate + diphosphate. It participates in nucleotide-sugar biosynthesis; CMP-3-deoxy-D-manno-octulosonate biosynthesis; CMP-3-deoxy-D-manno-octulosonate from 3-deoxy-D-manno-octulosonate and CTP: step 1/1. The protein operates within bacterial outer membrane biogenesis; lipopolysaccharide biosynthesis. In terms of biological role, activates KDO (a required 8-carbon sugar) for incorporation into bacterial lipopolysaccharide in Gram-negative bacteria. This Marinobacter nauticus (strain ATCC 700491 / DSM 11845 / VT8) (Marinobacter aquaeolei) protein is 3-deoxy-manno-octulosonate cytidylyltransferase.